The primary structure comprises 500 residues: NAD(P)H-quinone oxidoreductase chain 4, chloroplastic (500 aa).

Helical transmembrane passes span 4–24 (FPWL…MLFL), 35–55 (YTIC…CYNF), 87–107 (IGTI…AFPV), 113–130 (FFHF…GSFS), 134–154 (LLLF…LLSM), 167–187 (FILY…GISL), 211–231 (ILFY…IPLH), 242–262 (HYST…YGLV), 272–292 (AHSM…IYAA), 305–325 (IAYS…SITD), 330–350 (GAIL…FLAG), 386–406 (LALP…GIIT), 416–436 (ILII…LLSM), and 462–482 (LFLS…PDFV).

Belongs to the complex I subunit 4 family.

It localises to the plastid. It is found in the chloroplast thylakoid membrane. It carries out the reaction a plastoquinone + NADH + (n+1) H(+)(in) = a plastoquinol + NAD(+) + n H(+)(out). The catalysed reaction is a plastoquinone + NADPH + (n+1) H(+)(in) = a plastoquinol + NADP(+) + n H(+)(out). This is NAD(P)H-quinone oxidoreductase chain 4, chloroplastic from Arabis hirsuta (Hairy rock-cress).